Consider the following 78-residue polypeptide: RNA-binding protein Hfq (78 aa).

Residues 10-69 (DPFLNALRKEHVPVSIYLVNGIKLQGNIESFDQYVVLLRNTVTQMVYKHAISTVVPARPV) enclose the Sm domain.

Belongs to the Hfq family. Homohexamer.

In terms of biological role, RNA chaperone that binds small regulatory RNA (sRNAs) and mRNAs to facilitate mRNA translational regulation in response to envelope stress, environmental stress and changes in metabolite concentrations. Also binds with high specificity to tRNAs. The sequence is that of RNA-binding protein Hfq from Paraburkholderia phymatum (strain DSM 17167 / CIP 108236 / LMG 21445 / STM815) (Burkholderia phymatum).